Reading from the N-terminus, the 321-residue chain is Agamous-like MADS-box protein AGL80 (321 aa).

The MADS-box domain maps to M1–N61. A coiled-coil region spans residues F89–T114.

In terms of assembly, interacts with AGL61 and AGL62. Forms a heterodimer with AGL61. Interacts with MEE14/CBP1. In terms of tissue distribution, expressed in the central cell of the female gametophyte and in early endosperm. Also detected in ovaries, young siliques, roots, leaves, stems, young flowers and anthers.

Its subcellular location is the nucleus. Functionally, probable transcription factor. Controls central cell differentiation during female gametophyte development. Required for the expression of DEMETER and DD46, but not for the expression of FIS2. Probable transcription factor that may function in the maintenance of the proper function of the central cell in pollen tube attraction. This chain is Agamous-like MADS-box protein AGL80 (AGL80), found in Arabidopsis thaliana (Mouse-ear cress).